Here is a 143-residue protein sequence, read N- to C-terminus: Large ribosomal subunit protein uL11 (143 aa).

The protein belongs to the universal ribosomal protein uL11 family. In terms of assembly, part of the ribosomal stalk of the 50S ribosomal subunit. Interacts with L10 and the large rRNA to form the base of the stalk. L10 forms an elongated spine to which L12 dimers bind in a sequential fashion forming a multimeric L10(L12)X complex. In terms of processing, one or more lysine residues are methylated.

In terms of biological role, forms part of the ribosomal stalk which helps the ribosome interact with GTP-bound translation factors. This Kineococcus radiotolerans (strain ATCC BAA-149 / DSM 14245 / SRS30216) protein is Large ribosomal subunit protein uL11.